We begin with the raw amino-acid sequence, 462 residues long: Glutamate--tRNA ligase 1 (462 aa).

The 'HIGH' region motif lies at 8-18 (PSPTGYLHIGG). The 'KMSKS' region motif lies at 236–240 (KLSKR). ATP is bound at residue Lys239.

Belongs to the class-I aminoacyl-tRNA synthetase family. Glutamate--tRNA ligase type 1 subfamily. Monomer.

It is found in the cytoplasm. The catalysed reaction is tRNA(Glu) + L-glutamate + ATP = L-glutamyl-tRNA(Glu) + AMP + diphosphate. Its function is as follows. Catalyzes the attachment of glutamate to tRNA(Glu) in a two-step reaction: glutamate is first activated by ATP to form Glu-AMP and then transferred to the acceptor end of tRNA(Glu). This Sulfurovum sp. (strain NBC37-1) protein is Glutamate--tRNA ligase 1.